The primary structure comprises 101 residues: Small ribosomal subunit protein eS24 (101 aa).

It belongs to the eukaryotic ribosomal protein eS24 family.

The polypeptide is Small ribosomal subunit protein eS24 (Methanosarcina mazei (strain ATCC BAA-159 / DSM 3647 / Goe1 / Go1 / JCM 11833 / OCM 88) (Methanosarcina frisia)).